Consider the following 430-residue polypeptide: FAD-dependent monooxygenase asL4 (430 aa).

Residues 11–14 (GGIA), 33–34 (ER), R108, and Y278 each bind FAD.

The protein belongs to the aromatic-ring hydroxylase family. It depends on FAD as a cofactor.

It functions in the pathway secondary metabolite biosynthesis; terpenoid biosynthesis. In terms of biological role, flavin-dependent monooxygenase; part of the gene cluster that mediates the biosynthesis of xenovulene A, an unusual meroterpenoid that has potent inhibitory effects on the human gamma-aminobutyrate A (GABAA) benzodiazepine receptor. The first step of xenovulene A biosynthesis is the biosynthesis of 3-methylorcinaldehyde performed by the non-reducing polyketide synthase aspks1. The salicylate hydroxylase asL1 then catalyzes the oxidative dearomatization of 3-methylorcinaldehyde to yield a dearomatized hydroxycyclohexadione. The 2-oxoglutarate-dependent dioxygenase asL3 further catalyzes the oxidative ring expansion to provide the first tropolone metabolite. The cytochrome P450 monooxygenase asR2 allows the synthesis of tropolone hemiacetal. In parallel, a previously unrecognised class of terpene cyclase, asR6, produces alpha-humulene from farnesylpyrophosphate (FPP). The putative Diels-Alderase asR5 probably catalyzes the formation of the tropolone-humulene skeleton by linking humulene and the polyketide moiety. Oxidative-ring contractions catalyzed by asL4 and asL6 then processively remove carbon atoms from the polyketide to yield xenovulene A. In Sarocladium schorii (Acremonium strictum (strain IMI 501407)), this protein is FAD-dependent monooxygenase asL4.